Consider the following 359-residue polypeptide: Aminomethyltransferase (359 aa).

Belongs to the GcvT family. In terms of assembly, the glycine cleavage system is composed of four proteins: P, T, L and H.

It catalyses the reaction N(6)-[(R)-S(8)-aminomethyldihydrolipoyl]-L-lysyl-[protein] + (6S)-5,6,7,8-tetrahydrofolate = N(6)-[(R)-dihydrolipoyl]-L-lysyl-[protein] + (6R)-5,10-methylene-5,6,7,8-tetrahydrofolate + NH4(+). In terms of biological role, the glycine cleavage system catalyzes the degradation of glycine. This is Aminomethyltransferase from Synechococcus sp. (strain RCC307).